A 290-amino-acid polypeptide reads, in one-letter code: ATP synthase gamma chain (290 aa).

It belongs to the ATPase gamma chain family. In terms of assembly, F-type ATPases have 2 components, CF(1) - the catalytic core - and CF(0) - the membrane proton channel. CF(1) has five subunits: alpha(3), beta(3), gamma(1), delta(1), epsilon(1). CF(0) has three main subunits: a, b and c.

The protein localises to the cell inner membrane. Produces ATP from ADP in the presence of a proton gradient across the membrane. The gamma chain is believed to be important in regulating ATPase activity and the flow of protons through the CF(0) complex. This chain is ATP synthase gamma chain, found in Gemmatimonas aurantiaca (strain DSM 14586 / JCM 11422 / NBRC 100505 / T-27).